The chain runs to 118 residues: Holo-[acyl-carrier-protein] synthase (118 aa).

Residues Asp-8 and Glu-57 each coordinate Mg(2+).

This sequence belongs to the P-Pant transferase superfamily. AcpS family. Mg(2+) serves as cofactor.

The protein localises to the cytoplasm. It carries out the reaction apo-[ACP] + CoA = holo-[ACP] + adenosine 3',5'-bisphosphate + H(+). In terms of biological role, transfers the 4'-phosphopantetheine moiety from coenzyme A to a Ser of acyl-carrier-protein. This chain is Holo-[acyl-carrier-protein] synthase, found in Pediococcus pentosaceus (strain ATCC 25745 / CCUG 21536 / LMG 10740 / 183-1w).